Reading from the N-terminus, the 364-residue chain is Lysophosphatidic acid receptor 1 (364 aa).

Residues 1–50 (MAAAFTSSPVVSQPQFTAMNEQQCFSNESIAFFYNRSGKYLATEWNTVTK) are Extracellular-facing. 2 cysteine pairs are disulfide-bonded: Cys24–Cys190 and Cys188–Cys195. Residues Asn27 and Asn35 are each glycosylated (N-linked (GlcNAc...) asparagine). A 1-acyl-sn-glycero-3-phosphate is bound at residue Lys39. The helical transmembrane segment at 51-75 (LVMGLGITVCIFIMLANLLVMVAIY) threads the bilayer. Residues 76–83 (VNRRFHFP) are Cytoplasmic-facing. A helical transmembrane segment spans residues 84–107 (IYYLMANLAAADFFAGLAYFYLMF). The Extracellular portion of the chain corresponds to 108–121 (NTGPNTRRLTVSTW). Residues 122–144 (LLRQGLIDTSLTVSVANLLAIAI) traverse the membrane as a helical segment. Position 124–129 (124–129 (RQGLID)) interacts with a 1-acyl-sn-glycero-3-phosphate. The Cytoplasmic segment spans residues 145–163 (ERHITVFRMQLHARMSNRR). A helical transmembrane segment spans residues 164 to 184 (VVVVIVVIWTMAIVMGAIPSV). Topologically, residues 185-204 (GWNCICDIENCSNMAPLYSD) are extracellular. The chain crosses the membrane as a helical span at residues 205-225 (SYLVFWAIFNLVTFVVMVVLY). A 1-acyl-sn-glycero-3-phosphate is bound at residue Trp210. Residues 226–255 (AHIFGYVRQRTMRMSRHSSGPRRNRDTMMS) lie on the Cytoplasmic side of the membrane. A helical membrane pass occupies residues 256–280 (LLKTVVIVLGAFIICWTPGLVLLLL). At 281-294 (DVCCPQCDVLAYEK) the chain is on the extracellular side. Cysteines 284 and 287 form a disulfide. Residues 295–315 (FFLLLAEFNSAMNPIIYSYRD) traverse the membrane as a helical segment. The Cytoplasmic segment spans residues 316 to 364 (KEMSATFRQILCCQRSENTSGPTEGSDRSASSLNHTILAGVHSNDHSVV). Ser341 is modified (phosphoserine). Thr351 is subject to Phosphothreonine.

It belongs to the G-protein coupled receptor 1 family. In terms of assembly, interacts with RALA and GRK2. Interacts with GNAQ and GNA13. Interacts with CD14; the interaction is enhanced by exposure to bacterial lipopolysaccharide (LPS). N-glycosylated.

The protein localises to the cell surface. It localises to the cell membrane. The protein resides in the endosome. In terms of biological role, receptor for lysophosphatidic acid (LPA). Plays a role in the reorganization of the actin cytoskeleton, cell migration, differentiation and proliferation, and thereby contributes to the responses to tissue damage and infectious agents. Activates downstream signaling cascades via the G(i)/G(o), G(12)/G(13), and G(q) families of heteromeric G proteins. Signaling inhibits adenylyl cyclase activity and decreases cellular cAMP levels. Signaling triggers an increase of cytoplasmic Ca(2+) levels. Activates RALA; this leads to the activation of phospholipase C (PLC) and the formation of inositol 1,4,5-trisphosphate. Signaling mediates activation of down-stream MAP kinases. Contributes to the regulation of cell shape. Promotes Rho-dependent reorganization of the actin cytoskeleton in neuronal cells and neurite retraction. Promotes the activation of Rho and the formation of actin stress fibers. Promotes formation of lamellipodia at the leading edge of migrating cells via activation of RAC1. Through its function as LPA receptor, plays a role in chemotaxis and cell migration, including responses to injury and wounding. Plays a role in triggering inflammation in response to bacterial lipopolysaccharide (LPS) via its interaction with CD14. Promotes cell proliferation in response to LPA. Inhibits the intracellular ciliogenesis pathway in response to LPA and through AKT1 activation. Required for normal skeleton development. May play a role in osteoblast differentiation. Required for normal brain development. Required for normal proliferation, survival and maturation of newly formed neurons in the adult dentate gyrus. Plays a role in pain perception and in the initiation of neuropathic pain. The polypeptide is Lysophosphatidic acid receptor 1 (LPAR1) (Bos taurus (Bovine)).